The sequence spans 503 residues: Podocalyxin (503 aa).

Residues 1-21 (MPPTTALSALLLLLLSPASHS) form the signal peptide. Positions 19–236 (SHSHNGNETS…PLTSQTPGIT (218 aa)) are disordered. Residues 20–50 (HSHNGNETSTSAIKSSTVQSHQSATTSTEVT) are compositionally biased toward polar residues. The Extracellular portion of the chain corresponds to 22–404 (HNGNETSTSA…PPEVNEDRFS (383 aa)). Asn25, Asn89, and Asn94 each carry an N-linked (GlcNAc...) asparagine glycan. The segment covering 61 to 91 (STQPSNPTPFTTSTQSPSMPTSTPNPTSNQS) has biased composition (low complexity). The span at 107 to 126 (TSSPSSTAFTSSSGQTASSG) shows a compositional bias: low complexity. A compositionally biased stretch (polar residues) spans 131 to 183 (DSFTTAPTTTLGLINVSSQPTDLNTTSKLLSTPTTDNTTSPQQPVDSSPSTAS). 4 N-linked (GlcNAc...) asparagine glycosylation sites follow: Asn145, Asn154, Asn167, and Asn206. Residues 196–208 (SSSGSTPSTDNST) are compositionally biased toward low complexity. Residues 222–236 (SEATQPLTSQTPGIT) show a composition bias toward polar residues. A glycan (N-linked (GlcNAc...) asparagine) is linked at Asn303. A helical membrane pass occupies residues 405 to 425 (LPLIITIVCMASFLLLVAALY). Residues 426–503 (GCCHQRISQR…DLDEEEDTHL (78 aa)) are Cytoplasmic-facing. Position 463 is a phosphothreonine (Thr463). Ser482 is subject to Phosphoserine. Thr501 is subject to Phosphothreonine.

This sequence belongs to the podocalyxin family. Monomer; when associated with the membrane raft. Oligomer; when integrated in the apical membrane. Found in a complex with EZR, PODXL and NHERF2. Associates with the actin cytoskeleton through complex formation with EZR and NHERF2. Interacts (via the C-terminal PDZ-binding motif DTHL) with NHERF1 (via the PDZ domains); interaction is not detected in glomerular epithelium cells, take place early in the secretory pathway and is necessary for its apical membrane sorting. Interacts (via the C-terminal PDZ-binding motif DTHL) with NHERF2 (via the PDZ 1 domain); interaction is detected in glomerular epithelium cells. Interacts with EZR. Post-translationally, N- and O-linked glycosylated. Sialoglycoprotein. As to expression, expressed in liver cells and hematopoietic cells (at protein level). Glomerular epithelium cell (podocyte).

The protein resides in the apical cell membrane. Its subcellular location is the cell projection. The protein localises to the microvillus. It localises to the membrane raft. It is found in the lamellipodium. The protein resides in the filopodium. Its subcellular location is the ruffle. The protein localises to the membrane. Functionally, involved in the regulation of both adhesion and cell morphology and cancer progression. Functions as an anti-adhesive molecule that maintains an open filtration pathway between neighboring foot processes in the podocyte by charge repulsion. Acts as a pro-adhesive molecule, enhancing the adherence of cells to immobilized ligands, increasing the rate of migration and cell-cell contacts in an integrin-dependent manner. Induces the formation of apical actin-dependent microvilli. Involved in the formation of a preapical plasma membrane subdomain to set up initial epithelial polarization and the apical lumen formation during renal tubulogenesis. Plays a role in cancer development and aggressiveness by inducing cell migration and invasion through its interaction with the actin-binding protein EZR. Affects EZR-dependent signaling events, leading to increased activities of the MAPK and PI3K pathways in cancer cells. This Mus musculus (Mouse) protein is Podocalyxin (Podxl).